Consider the following 262-residue polypeptide: Hydroxyethylthiazole kinase (262 aa).

Residue M44 participates in substrate binding. Residues R118 and T166 each contribute to the ATP site. G193 is a substrate binding site.

It belongs to the Thz kinase family. Mg(2+) is required as a cofactor.

The catalysed reaction is 5-(2-hydroxyethyl)-4-methylthiazole + ATP = 4-methyl-5-(2-phosphooxyethyl)-thiazole + ADP + H(+). The protein operates within cofactor biosynthesis; thiamine diphosphate biosynthesis; 4-methyl-5-(2-phosphoethyl)-thiazole from 5-(2-hydroxyethyl)-4-methylthiazole: step 1/1. Catalyzes the phosphorylation of the hydroxyl group of 4-methyl-5-beta-hydroxyethylthiazole (THZ). This Chlamydia caviae (strain ATCC VR-813 / DSM 19441 / 03DC25 / GPIC) (Chlamydophila caviae) protein is Hydroxyethylthiazole kinase.